Here is a 203-residue protein sequence, read N- to C-terminus: Tegument protein UL51 homolog (203 aa).

Cys4 carries the S-palmitoyl cysteine; by host lipid modification.

This sequence belongs to the herpesviridae UL51 family. As to quaternary structure, oligomerizes. Interacts with U75; this interaction mediates U75 incorporation to virions. In terms of processing, phosphorylated. Palmitoylation is necessary for Golgi localization.

It is found in the virion tegument. Its subcellular location is the host cytoplasm. The protein resides in the host Golgi apparatus. Plays several roles during the time course of infection, including egress of virus particles from the perinuclear space and secondary envelopment of cytoplasmic capsids that bud into specific trans-Golgi network (TGN)-derived membranes. In Homo sapiens (Human), this protein is Tegument protein UL51 homolog (U44).